The sequence spans 351 residues: 3-dehydroquinate synthase (351 aa).

NAD(+)-binding positions include Asp-60 to Lys-65, Gly-94 to Asp-98, Thr-118 to Thr-119, Lys-131, Lys-140, and Phe-158 to Thr-161. 3 residues coordinate Zn(2+): Glu-173, His-239, and His-256.

This sequence belongs to the sugar phosphate cyclases superfamily. Dehydroquinate synthase family. Co(2+) is required as a cofactor. The cofactor is Zn(2+). It depends on NAD(+) as a cofactor.

It localises to the cytoplasm. It catalyses the reaction 7-phospho-2-dehydro-3-deoxy-D-arabino-heptonate = 3-dehydroquinate + phosphate. Its pathway is metabolic intermediate biosynthesis; chorismate biosynthesis; chorismate from D-erythrose 4-phosphate and phosphoenolpyruvate: step 2/7. Catalyzes the conversion of 3-deoxy-D-arabino-heptulosonate 7-phosphate (DAHP) to dehydroquinate (DHQ). The protein is 3-dehydroquinate synthase of Campylobacter jejuni subsp. jejuni serotype O:6 (strain 81116 / NCTC 11828).